Here is a 1791-residue protein sequence, read N- to C-terminus: Brefeldin A-inhibited guanine nucleotide-exchange protein 2 (1791 aa).

Residue Met1 is modified to N-acetylmethionine. Positions 2–224 are DCB; DCB:DCB domain and DCB:HUS domain interaction; it reads QESQTKSMFV…KPQSPVIQAT (223 aa). Disordered regions lie at residues 208 to 292 and 311 to 350; these read LEKP…DNGA and AAEK…IADD. Ser214, Ser218, and Ser227 each carry phosphoserine. Residues 214–225 are compositionally biased toward polar residues; that stretch reads SKPQSPVIQATA. Positions 233–243 are enriched in polar residues; that stretch reads LKQSQAQSKPT. Position 244 is a phosphothreonine (Thr244). A compositionally biased stretch (basic and acidic residues) spans 244-257; that stretch reads TPEKTELPNGDHAR. Phosphoserine is present on Ser277. Phosphoserine occurs at positions 355 and 356. Positions 515–535 are HUS; DCB:HUS domain interaction; it reads ADAQCVVDIYVNYDCDLNAAN. Ser621 carries the phosphoserine modification. Thr623 is subject to Phosphothreonine. Residue Ser624 is modified to Phosphoserine. Phosphothreonine is present on Thr633. Positions 661-792 constitute an SEC7 domain; the sequence is FNKKPKRGIQ…IIMLTTDLHS (132 aa). A phosphoserine mark is found at Ser707, Ser1518, Ser1520, Ser1521, Ser1532, Ser1535, Ser1541, and Ser1788.

As to quaternary structure, homodimer. Interacts with ARFGEF1/BIG1; both proteins are probably part of the same or very similar macromolecular complexes. Interacts with PRKAR1A, PRKAR2A, PRKAR1B, PRKAR2B, PPP1CC, PDE3A, TNFRSF1A, MYCBP and EXOC7. Interacts with GABRB1, GABRB2 and GABRB3. In vitro phosphorylated by PKA reducing its GEF activity and dephosphorylated by phosphatase PP1. Expressed in brain (at protein level).

Its subcellular location is the cytoplasm. The protein resides in the membrane. It is found in the golgi apparatus. The protein localises to the perinuclear region. It localises to the trans-Golgi network. Its subcellular location is the endosome. The protein resides in the cytoskeleton. It is found in the microtubule organizing center. The protein localises to the centrosome. It localises to the cell projection. Its subcellular location is the dendrite. The protein resides in the cytoplasmic vesicle. It is found in the synapse. Inhibited by brefeldin A. Functionally, promotes guanine-nucleotide exchange on ARF1 and ARF3 and to a lower extent on ARF5 and ARF6. Promotes the activation of ARF1/ARF5/ARF6 through replacement of GDP with GTP. Involved in the regulation of Golgi vesicular transport. Required for the integrity of the endosomal compartment. Involved in trafficking from the trans-Golgi network (TGN) to endosomes and is required for membrane association of the AP-1 complex and GGA1. Seems to be involved in recycling of the transferrin receptor from recycling endosomes to the plasma membrane. Probably is involved in the exit of GABA(A) receptors from the endoplasmic reticulum. Involved in constitutive release of tumor necrosis factor receptor 1 via exosome-like vesicles; the function seems to involve PKA and specifically PRKAR2B. Proposed to act as A kinase-anchoring protein (AKAP) and may mediate crosstalk between Arf and PKA pathways. In Rattus norvegicus (Rat), this protein is Brefeldin A-inhibited guanine nucleotide-exchange protein 2 (Arfgef2).